Reading from the N-terminus, the 305-residue chain is Methionyl-tRNA formyltransferase (305 aa).

111-114 is a (6S)-5,6,7,8-tetrahydrofolate binding site; sequence SILP.

This sequence belongs to the Fmt family.

The catalysed reaction is L-methionyl-tRNA(fMet) + (6R)-10-formyltetrahydrofolate = N-formyl-L-methionyl-tRNA(fMet) + (6S)-5,6,7,8-tetrahydrofolate + H(+). Attaches a formyl group to the free amino group of methionyl-tRNA(fMet). The formyl group appears to play a dual role in the initiator identity of N-formylmethionyl-tRNA by promoting its recognition by IF2 and preventing the misappropriation of this tRNA by the elongation apparatus. In Wolinella succinogenes (strain ATCC 29543 / DSM 1740 / CCUG 13145 / JCM 31913 / LMG 7466 / NCTC 11488 / FDC 602W) (Vibrio succinogenes), this protein is Methionyl-tRNA formyltransferase.